We begin with the raw amino-acid sequence, 719 residues long: Solute carrier organic anion transporter family member 6A1 (719 aa).

The disordered stretch occupies residues 1–46 (MFVGVARHSGSQDEVSRGVEPLEAARAQPAKDRRAKGTPKSSKPGK). The Cytoplasmic segment spans residues 1-106 (MFVGVARHSG…TCCECCNNIR (106 aa)). Basic residues predominate over residues 33 to 46 (RRAKGTPKSSKPGK). Residues 107 to 126 (CFMIFYCILLICQGVVFGLI) traverse the membrane as a helical segment. At 127–145 (DVSIGDFQKEYQLKTIEKL) the chain is on the extracellular side. A helical transmembrane segment spans residues 146–166 (ALEKSYDISSGLVAIFIAFYG). The Cytoplasmic portion of the chain corresponds to 167 to 171 (DRKKV). The helical transmembrane segment at 172–196 (IWFVASSFLIGLGSLLCAFPSINEE) threads the bilayer. Over 197–223 (NKQSKVGIEDICEEIKVVSGCQSSGIS) the chain is Extracellular. A helical membrane pass occupies residues 224 to 254 (FQSKYLSFFILGQTVQGIAGMPLYILGITFI). Residues 255–274 (DENVATHSAGIYLGIAECTS) are Cytoplasmic-facing. A helical membrane pass occupies residues 275 to 295 (MIGYALGYVLGAPLVKVPENT). Over 296 to 311 (TSATNTTVNNGSPEWL) the chain is Extracellular. Asn300 carries an N-linked (GlcNAc...) asparagine glycan. The helical transmembrane segment at 312 to 336 (WTWWINFLFAAVVAWCTLIPLSCFP) threads the bilayer. Topologically, residues 337-378 (NNMPGSTRIKARKRKQLHFFDSRLKDLKLGTNIKDLCAALWI) are cytoplasmic. Residues 379-400 (LMKNPVLICLALSKATEYLVII) form a helical membrane-spanning segment. The Extracellular segment spans residues 401–420 (GASEFLPIYLENQFILTPTV). The chain crosses the membrane as a helical span at residues 421–444 (ATTLAGLVLIPGGALGQLLGGVIV). Over 445–448 (STLE) the chain is Cytoplasmic. The chain crosses the membrane as a helical span at residues 449–472 (MSCKALMRFIMVTSVISLILLVFI). Over 473 to 581 (IFVRCNPVQF…DAKCYKLPLF (109 aa)) the chain is Extracellular. The Kazal-like domain occupies 496-551 (GNLTAPCNEKCRCSSSIYSSICGRDDIEYFSPCFAGCTYSKAQNQKKMYYNCSCIK). Asn497 is a glycosylation site (N-linked (GlcNAc...) asparagine). 3 disulfides stabilise this stretch: Cys502–Cys532, Cys508–Cys528, and Cys517–Cys549. N-linked (GlcNAc...) asparagine glycosylation occurs at Asn546. A helical transmembrane segment spans residues 582–604 (IAFIFSTLIFSGFSGVPIVLAMT). The Cytoplasmic portion of the chain corresponds to 605-613 (RVVPDKLRS). The chain crosses the membrane as a helical span at residues 614 to 639 (LALGVSYVILRIFGTIPGPSIFKMSG). The Extracellular portion of the chain corresponds to 640 to 673 (ETSCILRDVNKCGHTGRCWIYNKTKMAFLLVGIC). Asn661 is a glycosylation site (N-linked (GlcNAc...) asparagine). The chain crosses the membrane as a helical span at residues 674–691 (FLCKLCTIIFTTIAFFIY). Over 692–719 (KRRLNENTDFPDVTVKNPKVKKKEETDL) the chain is Cytoplasmic.

It belongs to the organo anion transporter (TC 2.A.60) family. Strongly expressed in testis. Weakly expressed in spleen, brain, fetal brain and placenta. Detected in lung tumors.

Its subcellular location is the cell membrane. The sequence is that of Solute carrier organic anion transporter family member 6A1 (SLCO6A1) from Homo sapiens (Human).